The following is a 317-amino-acid chain: 4-diphosphocytidyl-2-C-methyl-D-erythritol kinase (317 aa).

Lys-11 is an active-site residue. 99 to 109 (PVAAGLAGGST) serves as a coordination point for ATP. Asp-141 is a catalytic residue.

The protein belongs to the GHMP kinase family. IspE subfamily.

The catalysed reaction is 4-CDP-2-C-methyl-D-erythritol + ATP = 4-CDP-2-C-methyl-D-erythritol 2-phosphate + ADP + H(+). It functions in the pathway isoprenoid biosynthesis; isopentenyl diphosphate biosynthesis via DXP pathway; isopentenyl diphosphate from 1-deoxy-D-xylulose 5-phosphate: step 3/6. Functionally, catalyzes the phosphorylation of the position 2 hydroxy group of 4-diphosphocytidyl-2C-methyl-D-erythritol. In Nostoc punctiforme (strain ATCC 29133 / PCC 73102), this protein is 4-diphosphocytidyl-2-C-methyl-D-erythritol kinase.